Reading from the N-terminus, the 100-residue chain is Noncompact myelin-associated protein (100 aa).

At 1–28 (MTTATTLGDAVFSLNMTRGEDILYKSSG) the chain is on the extracellular side. A helical transmembrane segment spans residues 29–49 (AIVAAIVVVVVIIVTLVLILL). The Cytoplasmic portion of the chain corresponds to 50–100 (KMYNRRMRTRRELEPKSPKPPVPPALDPNSNGSQQPAAVTSDPADVPVETR). The interval 58 to 100 (TRRELEPKSPKPPVPPALDPNSNGSQQPAAVTSDPADVPVETR) is disordered. The segment covering 77–87 (PNSNGSQQPAA) has biased composition (polar residues).

In terms of processing, glycosylated. As to expression, expressed in the peripheral nervous system Schwann cells (at protein level).

It is found in the cell membrane. Functionally, plays a role in myelin formation. The sequence is that of Noncompact myelin-associated protein (Ncmap) from Rattus norvegicus (Rat).